The primary structure comprises 242 residues: ATP-dependent dethiobiotin synthetase BioD (242 aa).

Residue 12 to 17 coordinates ATP; it reads SVGKTI. Threonine 16 lines the Mg(2+) pocket. Lysine 37 is a catalytic residue. Aspartate 66 contacts ATP. Positions 66 and 124 each coordinate Mg(2+). 184–185 contacts ATP; it reads NR.

Belongs to the dethiobiotin synthetase family. As to quaternary structure, homodimer. Mg(2+) serves as cofactor.

It is found in the cytoplasm. The enzyme catalyses (7R,8S)-7,8-diammoniononanoate + CO2 + ATP = (4R,5S)-dethiobiotin + ADP + phosphate + 3 H(+). It participates in cofactor biosynthesis; biotin biosynthesis; biotin from 7,8-diaminononanoate: step 1/2. In terms of biological role, catalyzes a mechanistically unusual reaction, the ATP-dependent insertion of CO2 between the N7 and N8 nitrogen atoms of 7,8-diaminopelargonic acid (DAPA, also called 7,8-diammoniononanoate) to form a ureido ring. In Mannheimia succiniciproducens (strain KCTC 0769BP / MBEL55E), this protein is ATP-dependent dethiobiotin synthetase BioD.